The sequence spans 70 residues: DNA-directed RNA polymerase subunit omega (70 aa).

It belongs to the RNA polymerase subunit omega family. As to quaternary structure, the RNAP catalytic core consists of 2 alpha, 1 beta, 1 beta' and 1 omega subunit. When a sigma factor is associated with the core the holoenzyme is formed, which can initiate transcription.

The catalysed reaction is RNA(n) + a ribonucleoside 5'-triphosphate = RNA(n+1) + diphosphate. Functionally, promotes RNA polymerase assembly. Latches the N- and C-terminal regions of the beta' subunit thereby facilitating its interaction with the beta and alpha subunits. This is DNA-directed RNA polymerase subunit omega from Bacillus anthracis.